The chain runs to 353 residues: Nif-specific regulatory protein (353 aa).

The 229-residue stretch at 12–240 (IVGESAALKE…LQNCTQRTAT (229 aa)) folds into the Sigma-54 factor interaction domain. Residues 40–47 (GESGTGKE) and 103–112 (AHGGTLLLDE) contribute to the ATP site. Residues 325 to 344 (QAKAARLLGRTPRQVGYSLR) constitute a DNA-binding region (H-T-H motif).

In terms of assembly, interacts with sigma-54.

Its function is as follows. Required for activation of most nif operons, which are directly involved in nitrogen fixation. The protein is Nif-specific regulatory protein (nifA) of Rhizobium leguminosarum bv. trifolii.